Here is a 121-residue protein sequence, read N- to C-terminus: uncharacterized protein (121 aa).

Helical transmembrane passes span 26–46 and 72–92; these read FIALFDFPLLFIYFPFLILVL and AFLTHEECGLVLQYIYYWLGL.

The protein resides in the membrane. This is an uncharacterized protein from Saccharomyces cerevisiae (strain ATCC 204508 / S288c) (Baker's yeast).